A 118-amino-acid chain; its full sequence is MNFRALFAATVAALVGSTSATTCTTTQQTAAYVALVSILSDTSFNQCSTDSGYSMLTATSLPTTEQYKLMCASTACKTMINKIVTLNPPDCELTVPTSGLVLNVFTYANGFSSTCASL.

The signal sequence occupies residues 1-20 (MNFRALFAATVAALVGSTSA). 3 disulfides stabilise this stretch: Cys23-Cys91, Cys47-Cys76, and Cys71-Cys115.

Belongs to the elicitin family.

The protein resides in the secreted. In terms of biological role, induces local and distal defense responses (incompatible hypersensitive reaction) in plants from the solanaceae and cruciferae families. Elicits leaf necrosis and causes the accumulation of pathogenesis-related proteins. Might interact with the lipidic molecules of the plasma membrane. In Phytophthora nicotianae (Potato buckeye rot agent), this protein is Elicitin (PARA1).